Consider the following 564-residue polypeptide: O-fucosyltransferase 5 (564 aa).

Residues 1–28 form a disordered region; that stretch reads MVRNSSDEEEDHRNLIPQNDTRDNDLNL. The helical; Signal-anchor for type II membrane protein transmembrane segment at 70–90 threads the bilayer; sequence YVVAAVSLTLFVGLLFLFTDT. 3 N-linked (GlcNAc...) asparagine glycosylation sites follow: Asn129, Asn134, and Asn174. Substrate contacts are provided by residues 413-415 and 529-530; these read HLR and TF.

This sequence belongs to the glycosyltransferase GT106 family.

It is found in the membrane. It functions in the pathway glycan metabolism. The chain is O-fucosyltransferase 5 from Arabidopsis thaliana (Mouse-ear cress).